Consider the following 146-residue polypeptide: Hemoglobin subunit beta-2 (146 aa).

In terms of domain architecture, Globin spans 2–146 (FLSAEEKGLV…VASALAHRYH (145 aa)). Lysine 17 is subject to N6-succinyllysine. Serine 44 and serine 50 each carry phosphoserine. N6-succinyllysine is present on lysine 59. Residues histidine 63 and histidine 92 each contribute to the heme b site. Arginine 104 is subject to Asymmetric dimethylarginine.

Belongs to the globin family. In terms of assembly, heterotetramer of two alpha chains and two beta chains. In terms of tissue distribution, red blood cells.

Functionally, involved in oxygen transport from the lung to the various peripheral tissues. The polypeptide is Hemoglobin subunit beta-2 (HBB2) (Panthera pardus saxicolor (Northern Persian leopard)).